We begin with the raw amino-acid sequence, 105 residues long: uncharacterized protein (105 aa).

2 consecutive transmembrane segments (helical) span residues 7-26 and 30-52; these read VLSV…WLSL and VDMT…LISI.

The protein localises to the cell membrane. This is an uncharacterized protein from Archaeoglobus fulgidus (strain ATCC 49558 / DSM 4304 / JCM 9628 / NBRC 100126 / VC-16).